The sequence spans 590 residues: UvrABC system protein C (590 aa).

One can recognise a GIY-YIG domain in the interval 14-91 (DQPGCYLMKD…IKKYDPKYNV (78 aa)). In terms of domain architecture, UVR spans 196-231 (QQIKKELTEKMQEAAEQLEFERAKELRDQIAYIDST).

Belongs to the UvrC family. As to quaternary structure, interacts with UvrB in an incision complex.

Its subcellular location is the cytoplasm. The UvrABC repair system catalyzes the recognition and processing of DNA lesions. UvrC both incises the 5' and 3' sides of the lesion. The N-terminal half is responsible for the 3' incision and the C-terminal half is responsible for the 5' incision. The protein is UvrABC system protein C of Bacillus pumilus (strain SAFR-032).